We begin with the raw amino-acid sequence, 388 residues long: Succinate--CoA ligase [ADP-forming] subunit beta (388 aa).

The ATP-grasp domain occupies 9–244; sequence KQLFKEYGLP…PSQEDAREAH (236 aa). ATP is bound by residues K46, 53–55, E99, T102, and E107; that span reads GRG. Mg(2+) contacts are provided by N199 and D213. Substrate-binding positions include N264 and 321–323; that span reads GIV.

It belongs to the succinate/malate CoA ligase beta subunit family. As to quaternary structure, heterotetramer of two alpha and two beta subunits. The cofactor is Mg(2+).

The catalysed reaction is succinate + ATP + CoA = succinyl-CoA + ADP + phosphate. It carries out the reaction GTP + succinate + CoA = succinyl-CoA + GDP + phosphate. It participates in carbohydrate metabolism; tricarboxylic acid cycle; succinate from succinyl-CoA (ligase route): step 1/1. Succinyl-CoA synthetase functions in the citric acid cycle (TCA), coupling the hydrolysis of succinyl-CoA to the synthesis of either ATP or GTP and thus represents the only step of substrate-level phosphorylation in the TCA. The beta subunit provides nucleotide specificity of the enzyme and binds the substrate succinate, while the binding sites for coenzyme A and phosphate are found in the alpha subunit. The chain is Succinate--CoA ligase [ADP-forming] subunit beta from Alteromonas mediterranea (strain DSM 17117 / CIP 110805 / LMG 28347 / Deep ecotype).